Here is a 397-residue protein sequence, read N- to C-terminus: Citrate synthase (397 aa).

Catalysis depends on residues His266 and Asp320.

Belongs to the citrate synthase family.

It catalyses the reaction oxaloacetate + acetyl-CoA + H2O = citrate + CoA + H(+). Its pathway is carbohydrate metabolism; tricarboxylic acid cycle; isocitrate from oxaloacetate: step 1/2. In Synechocystis sp. (strain ATCC 27184 / PCC 6803 / Kazusa), this protein is Citrate synthase (gltA).